We begin with the raw amino-acid sequence, 485 residues long: Eukaryotic translation initiation factor 3 subunit E (485 aa).

Positions 219–391 (NQPDGPDGIV…GEIHITKPVT (173 aa)) constitute a PCI domain. The disordered stretch occupies residues 444–485 (QGGGKSNKKGDYKKGDYKKGGDFKKGGDFKKGGDHKKRAWVK). Basic and acidic residues predominate over residues 451-475 (KKGDYKKGDYKKGGDFKKGGDFKKG). Positions 476–485 (GDHKKRAWVK) are enriched in basic residues.

Belongs to the eIF-3 subunit E family. In terms of assembly, component of the eukaryotic translation initiation factor 3 (eIF-3) complex.

The protein localises to the cytoplasm. Functionally, component of the eukaryotic translation initiation factor 3 (eIF-3) complex, which is involved in protein synthesis of a specialized repertoire of mRNAs and, together with other initiation factors, stimulates binding of mRNA and methionyl-tRNAi to the 40S ribosome. The eIF-3 complex specifically targets and initiates translation of a subset of mRNAs involved in cell proliferation. The sequence is that of Eukaryotic translation initiation factor 3 subunit E from Monosiga brevicollis (Choanoflagellate).